The chain runs to 1070 residues: MLREGNELMSTIPGFNQIQFEGFCQFIDQGLPEELYKFPKIEDTDQEIEFQLFVETYQLVEPVIKEKDAVYKSLTYSSELYVSAGLIWKTGREIQEQTILIGNIPLMNSLGTFLVNGIYRIVINQILQSPGIYYRSELDHNGISVYTGTIISDWGGRSELEIDRKARIWARVSRKQKISILVLSSAMGSNLKEILDNVCYPEIFLSFLNDKDKKNFGSKENAILEFYQQFACVGGDPVFSESLCKELQKKFFQQKCELGRIGRRNMNRRLNLDIPQNNTFLLPRDILAATDHLIGMKFGMGTLDDMNHLKNKRIRSVADLLQDQFGLALVRLENVVRGTICGAIRHKLIPTPQNLVTSTPLTTTYESFFGLHPLSQVLDRTNPLTQIVHGRKLSYLGPGGLTGRTASFRIRDIHPSHYGRICPIDTSEGINVGLIGSLAIHARIGLLGSLESPFYKISERSAMVQMLFLSPSIDEYYMVSTGNSLALNQGIQEEQVVPARYRQEFLTIAWEQVHLRSIFPFQYFSIGASLIPFIEHNDANRALMSSNMQRQAVPLSQSEKCIVGTGLERQAALDSGILAIAEHEGKILYTDTDKIIFSGNGDIQSIPLVMYQRSNKNTCMHQNPRIPRGKCIKKGQILADGAATVGGELALGKNILVAYMPWEGYNFEDAVLISERLVYEDIYTSFHIRKYDIQTYVTSQGPERVTSEIPHLEAHLLRNLDKNGIVRLGSWVETGDILVGKLTPQMAKESSYAPEDRLLRAILGIQVSTSKETCLKLPIGGRGRVIDVRWIQKKGGSSYNPETIHVYILQKREIKVGDKVAGRHGNKGIISKILPRQDMPYLQDGRPVDMVFNPLGVPSRMNVGQIFECSLGLAGGLLDRHYRIAPFDERYEQEASRKLVFSELYQASKQTSEPWIFEPEYPGKSRIFDGRTGDLFEQPVIIGNPYILKLIHQVDDKIHGRSSGHYALVTQQPLRGRAKQGGQRVGEMEVWALEGFGVAHILQEMLTYKSDHIKARQDVLGTTIIGGTIPNPEDAPESFRLLIRELRSLALELNHFLVSEKTFQINRMEA.

Belongs to the RNA polymerase beta chain family. In terms of assembly, in plastids the minimal PEP RNA polymerase catalytic core is composed of four subunits: alpha, beta, beta', and beta''. When a (nuclear-encoded) sigma factor is associated with the core the holoenzyme is formed, which can initiate transcription.

The protein localises to the plastid. It localises to the chloroplast. It carries out the reaction RNA(n) + a ribonucleoside 5'-triphosphate = RNA(n+1) + diphosphate. In terms of biological role, DNA-dependent RNA polymerase catalyzes the transcription of DNA into RNA using the four ribonucleoside triphosphates as substrates. This Silene latifolia (White campion) protein is DNA-directed RNA polymerase subunit beta.